We begin with the raw amino-acid sequence, 122 residues long: Seminal vesicle secretory protein 5 (122 aa).

Residues 1 to 21 (MSPTSFFLLTLLLVLVTEARG) form the signal peptide. Residues 23-122 (RERFSQSAED…KTRVKSRILK (100 aa)) form a disordered region. A compositionally biased stretch (polar residues) spans 27–37 (SQSAEDPSSSH).

It belongs to the SVP2/SVP5/SVP6 family. In terms of tissue distribution, testis.

It localises to the secreted. Its subcellular location is the extracellular space. In Mus musculus (Mouse), this protein is Seminal vesicle secretory protein 5 (Svs5).